The primary structure comprises 601 residues: NADPH--cytochrome P450 reductase (601 aa).

The 145-residue stretch at 25-169 (IVVFYGSQTG…DFVTWREQFW (145 aa)) folds into the Flavodoxin-like domain. Residues 31-36 (SQTGTG), 83-86 (ATYG), 118-127 (LGDKTYEHYN), and Asp-153 each bind FMN. Residues 224–425 (KNPFLAPVTV…ICAVLVEYXT (202 aa)) enclose the FAD-binding FR-type domain. Residues 399-402 (RYYS), 417-419 (CAV), Tyr-423, and 427-430 (GVAT) each bind FAD. Residues Thr-458, 519–520 (SR), 525–529 (KVYVQ), and Asp-562 each bind NADP(+). FAD is bound at residue Trp-600.

It belongs to the NADPH--cytochrome P450 reductase family. In the N-terminal section; belongs to the flavodoxin family. The protein in the C-terminal section; belongs to the flavoprotein pyridine nucleotide cytochrome reductase family. The cofactor is FAD. FMN serves as cofactor.

It localises to the endoplasmic reticulum membrane. It carries out the reaction 2 oxidized [cytochrome P450] + NADPH = 2 reduced [cytochrome P450] + NADP(+) + H(+). In terms of biological role, this enzyme is required for electron transfer from NADP to cytochrome P450 in microsomes. It can also provide electron transfer to heme oxygenase and cytochrome B5. The sequence is that of NADPH--cytochrome P450 reductase from Salmo trutta (Brown trout).